Reading from the N-terminus, the 246-residue chain is Probable transcriptional regulatory protein ESA_01378 (246 aa).

The protein belongs to the TACO1 family.

The protein resides in the cytoplasm. This is Probable transcriptional regulatory protein ESA_01378 from Cronobacter sakazakii (strain ATCC BAA-894) (Enterobacter sakazakii).